The chain runs to 392 residues: Serine protease ea (392 aa).

Residues 1 to 19 form the signal peptide; it reads MLKPSIICLFLGILAKSSA. The propeptide at 20 to 127 is activation peptide; that stretch reads GQFYFPNEAA…GQCGNILSNR (108 aa). One can recognise a Clip domain in the interval 36 to 89; sequence RCITPNRERALCIHLEDCKYLYGLLTTTPLRDTDRLYLSRSQCGYTNGKVLICC. Intrachain disulfides connect C37/C88, C47/C78, and C53/C89. N107 carries N-linked (GlcNAc...) asparagine glycosylation. 5 disulfide bridges follow: C120–C260, C158–C174, C202–C212, C307–C324, and C334–C367. The Peptidase S1 domain maps to 128–391; it reads IYGGMKTKID…YVDWIQNTIE (264 aa). H173 acts as the Charge relay system in catalysis. E193, D195, T198, and D201 together coordinate Ca(2+). The active-site Charge relay system is D240. Residue S338 is the Charge relay system of the active site.

It belongs to the peptidase S1 family. CLIP subfamily. In terms of assembly, interacts with Spn27A; the two proteins are covalently linked leading to inhibition of ea catalytic activity. Interacts (via Peptidase domain) with snk (via N-terminal prodomain); leads to proteolytic activation of ea by snk. Sulfation of a vitelline membrane component by pip is required for proteolytic cleavage of ea by snk but not for the interaction of ea with snk. In terms of processing, proteolytically cleaved by snk. Activation peptide and active catalytic domain remain associated by a disulfide bond. Processed ea/easter is present in extremely low amounts in the early embryo as it is rapidly converted into a high molecular mass complex made up of ea covalently bound to the serpin Spn27A. Zymogen activation is also controlled by a negative feedback loop from Dorsal.

Its subcellular location is the secreted. Activated proteolytically by snk; activation requires both activation of the ndl-gd-snk protease cascade and sulfation of a vitelline membrane component by pip. Inhibited by binding of the serpin Spn27A. Its function is as follows. Component of the extracellular signaling pathway that establishes the dorsal-ventral pathway of the embryo. A protease cascade involving ndl, gd, snk and ea results in activation of the spz Toll receptor ligand; acts downstream of ndl, gd and snk and is required for proteolytic processing of spz. Activation of ea requires both activation of the ndl-gd-snk protease cascade and sulfation of a vitelline membrane component by pip. Localized activation of the Toll receptor in the ventral region of the embryo defines cell identities along the dorsal-ventral continuum. The sequence is that of Serine protease ea from Drosophila melanogaster (Fruit fly).